We begin with the raw amino-acid sequence, 308 residues long: NADH-cytochrome b5 reductase 1 (308 aa).

The helical transmembrane segment at 10–27 threads the bilayer; sequence INGVYIPSALLIFGTTII. Positions 59–164 constitute an FAD-binding FR-type domain; the sequence is TEFQNFVLKD…RGPKGAMVYT (106 aa). FAD contacts are provided by residues 144–159 and 170–207; these read TTLR…GPKG and HIGM…QIDL.

The protein belongs to the flavoprotein pyridine nucleotide cytochrome reductase family. Monomer. Component of the 2-(3-amino-3-carboxypropyl)histidine synthase complex composed of DPH1, DPH2, DPH3 and a NADH-dependent reductase, predominantly CBR1. It depends on FAD as a cofactor.

It is found in the mitochondrion outer membrane. The catalysed reaction is 2 Fe(III)-[cytochrome b5] + NADH = 2 Fe(II)-[cytochrome b5] + NAD(+) + H(+). It carries out the reaction 2 Fe(3+)-[Dph3] + NADH = 2 Fe(2+)-[Dph3] + NAD(+) + H(+). It functions in the pathway protein modification; peptidyl-diphthamide biosynthesis. Its function is as follows. NADH-dependent reductase for DPH3 and cytochrome b5. Required for the first step of diphthamide biosynthesis, a post-translational modification of histidine which occurs in elongation factor 2. DPH1 and DPH2 transfer a 3-amino-3-carboxypropyl (ACP) group from S-adenosyl-L-methionine (SAM) to a histidine residue, the reaction is assisted by a reduction system comprising DPH3 and a NADH-dependent reductase, predominantly CBR1. By reducing DPH3, also involved in the formation of the tRNA wobble base modification mcm5s 2U (5-methoxycarbonylmethyl-2-thiouridine), mediated by the elongator complex. The cytochrome b5/NADH cytochrome b5 reductase electron transfer system supports the catalytic activity of several sterol biosynthetic enzymes. This chain is NADH-cytochrome b5 reductase 1 (CBR1), found in Coccidioides immitis (strain RS) (Valley fever fungus).